A 514-amino-acid chain; its full sequence is FAD-dependent monooxygenase CPUR_05423 (514 aa).

The FAD site is built by V79 and R146. Residue R227 is part of the active site. FAD-binding residues include D358 and G371.

Belongs to the paxM FAD-dependent monooxygenase family. Requires FAD as cofactor.

The protein operates within pigment biosynthesis. Functionally, FAD-dependent monooxygenase; part of the ergochrome gene cluster responsible for the typical purple-black color of the ergot sclerotia. The ergochrome gene cluster produces several ergot pigments including the yellow ergochrome secalonic acid and its derivatives, as well as the red anthraquinones endocrocin and clavorubin. The pathway begins with the synthesis of atrochrysone thioester by the polyketide synthase (PKS) CPUR_05437. The atrochrysone carboxyl ACP thioesterase CPUR_05436 then breaks the thioester bond and releases the atrochrysone carboxylic acid from CPUR_05437. The atrochrysone carboxylic acid is then converted to atrochrysone which is further transformed into emodin anthrone. The next step is performed by the anthrone oxygenase CPUR_05434 that catalyzes the oxidation of emodinanthrone to emodin. Emodin is further modified to yield monodictyphenone via several steps involving CPUR_05427, CPUR_05428, CPUR_05429 and CPUR_05430. The short chain dehydrogenase/reductase CPUR_05418 then catalyzes the C-5 ketoreduction to give the xanthone skeleton of the monomeric units. Ergochromes formation requires further dimerization steps of different xanthone units, probably catalyzed by the cytochrome P450 monooxygenase CPUR_05419. CPUR_05425, CPUR_05426 and CPUR_05431 are unique to Claviceps, thus it is likely that they are involved in further modification of xanthone units or in their dimerization. The yellow ergochromes and the red anthraquinone pigments endocrocin and clavorubin are products from the same PKS derived precursors and the latter are likely shunt products in the pathway of xanthone biosynthesis. It is proposed that atrochrysone carboxylic acid released from the PKS CPUR_05437 can also be converted to endocrocin anthrone which is further oxidized into endocrocin by CPUR_05435. Endocrocin could be then modified to clavorubin, possibly by CPUR_05423 and CPUR_05431. Clavorubin is the principal anthraquinone metabolite produced by the cluster with a much higher yield compared to endocrocin. This chain is FAD-dependent monooxygenase CPUR_05423, found in Claviceps purpurea (strain 20.1) (Ergot fungus).